The chain runs to 304 residues: Voltage-dependent anion channel-forming protein YneE (304 aa).

The next 4 membrane-spanning stretches (helical) occupy residues 28–48, 50–70, 209–229, and 235–255; these read LLLN…YTML, IKFT…FLGF, AYTL…PFAL, and YMTP…DALA.

The protein belongs to the anion channel-forming bestrophin (TC 1.A.46) family.

It localises to the cell membrane. The polypeptide is Voltage-dependent anion channel-forming protein YneE (yneE) (Salmonella typhi).